The chain runs to 81 residues: MGLRSLGIASSTQMYLAPNWDLVGHPFDCTLNRRLLPPVPNFWGQTTGWLSWQATLLQQFPWVGPRSNSLGSNCVFLAIFR.

This is an uncharacterized protein from Saccharomyces cerevisiae (strain ATCC 204508 / S288c) (Baker's yeast).